We begin with the raw amino-acid sequence, 205 residues long: NADH-quinone oxidoreductase subunit I (205 aa).

4Fe-4S ferredoxin-type domains follow at residues 75-104 and 114-143; these read RLLE…METS and HEYT…HGGR. 8 residues coordinate [4Fe-4S] cluster: Cys-84, Cys-87, Cys-90, Cys-94, Cys-123, Cys-126, Cys-129, and Cys-133.

It belongs to the complex I 23 kDa subunit family. In terms of assembly, NDH-1 is composed of 14 different subunits. Subunits NuoA, H, J, K, L, M, N constitute the membrane sector of the complex. [4Fe-4S] cluster is required as a cofactor.

Its subcellular location is the cell inner membrane. It carries out the reaction a quinone + NADH + 5 H(+)(in) = a quinol + NAD(+) + 4 H(+)(out). In terms of biological role, NDH-1 shuttles electrons from NADH, via FMN and iron-sulfur (Fe-S) centers, to quinones in the respiratory chain. The immediate electron acceptor for the enzyme in this species is believed to be ubiquinone. Couples the redox reaction to proton translocation (for every two electrons transferred, four hydrogen ions are translocated across the cytoplasmic membrane), and thus conserves the redox energy in a proton gradient. This Wolinella succinogenes (strain ATCC 29543 / DSM 1740 / CCUG 13145 / JCM 31913 / LMG 7466 / NCTC 11488 / FDC 602W) (Vibrio succinogenes) protein is NADH-quinone oxidoreductase subunit I.